Here is a 286-residue protein sequence, read N- to C-terminus: 4-diphosphocytidyl-2-C-methyl-D-erythritol kinase (286 aa).

The active site involves Lys13. Pro96–Ser106 is a binding site for ATP. Asp138 is an active-site residue.

This sequence belongs to the GHMP kinase family. IspE subfamily.

The catalysed reaction is 4-CDP-2-C-methyl-D-erythritol + ATP = 4-CDP-2-C-methyl-D-erythritol 2-phosphate + ADP + H(+). It functions in the pathway isoprenoid biosynthesis; isopentenyl diphosphate biosynthesis via DXP pathway; isopentenyl diphosphate from 1-deoxy-D-xylulose 5-phosphate: step 3/6. Functionally, catalyzes the phosphorylation of the position 2 hydroxy group of 4-diphosphocytidyl-2C-methyl-D-erythritol. The polypeptide is 4-diphosphocytidyl-2-C-methyl-D-erythritol kinase (Pseudoalteromonas atlantica (strain T6c / ATCC BAA-1087)).